Here is a 35-residue protein sequence, read N- to C-terminus: Photosystem II reaction center protein T (35 aa).

A helical transmembrane segment spans residues 3–23 (ALVYTFLLVSTLGIIFFAIFF).

The protein belongs to the PsbT family. As to quaternary structure, PSII is composed of 1 copy each of membrane proteins PsbA, PsbB, PsbC, PsbD, PsbE, PsbF, PsbH, PsbI, PsbJ, PsbK, PsbL, PsbM, PsbT, PsbY, PsbZ, Psb30/Ycf12, at least 3 peripheral proteins of the oxygen-evolving complex and a large number of cofactors. It forms dimeric complexes.

The protein localises to the plastid. Its subcellular location is the chloroplast thylakoid membrane. Found at the monomer-monomer interface of the photosystem II (PS II) dimer, plays a role in assembly and dimerization of PSII. PSII is a light-driven water plastoquinone oxidoreductase, using light energy to abstract electrons from H(2)O, generating a proton gradient subsequently used for ATP formation. The chain is Photosystem II reaction center protein T from Amborella trichopoda.